Consider the following 394-residue polypeptide: L-lactate dehydrogenase (394 aa).

One can recognise an FMN hydroxy acid dehydrogenase domain in the interval 1–380; that stretch reads MIISAASDYR…SRDSLVQNAE (380 aa). Residue tyrosine 24 coordinates substrate. Positions 106 and 127 each coordinate FMN. Residue tyrosine 129 coordinates substrate. Threonine 155 lines the FMN pocket. Arginine 164 contacts substrate. Lysine 251 contacts FMN. Histidine 275 functions as the Proton acceptor in the catalytic mechanism. Substrate is bound at residue arginine 278. FMN is bound at residue 306–330; that stretch reads DSGIRNGLDVVRMIALGADSVLLGR.

Belongs to the FMN-dependent alpha-hydroxy acid dehydrogenase family. Requires FMN as cofactor.

The protein localises to the cell inner membrane. It carries out the reaction (S)-lactate + A = pyruvate + AH2. Catalyzes the conversion of L-lactate to pyruvate. Is coupled to the respiratory chain. The protein is L-lactate dehydrogenase of Klebsiella pneumoniae (strain 342).